Here is a 504-residue protein sequence, read N- to C-terminus: Activin receptor type-1 (504 aa).

Positions 1–16 (MALPVLLLLLALPSRS) are cleaved as a signal peptide. Over 17–119 (VQDEELKLNE…EAAGYSMETL (103 aa)) the chain is Extracellular. A glycan (N-linked (GlcNAc...) asparagine) is linked at asparagine 94. The chain crosses the membrane as a helical span at residues 120–140 (IIVILAPVVVLVIFSVVAVLI). Topologically, residues 141–504 (IRRIQKNHME…NSLDKLKADC (364 aa)) are cytoplasmic. Residues 173–202 (STLADLLDHSCTSGSGSGLPFLVQRTVARQ) form the GS domain. A Protein kinase domain is found at 203–497 (ITLVECVGKG…KTLTKIDNSL (295 aa)). ATP contacts are provided by residues 209–217 (VGKGRYGEV) and lysine 230. Aspartate 331 acts as the Proton acceptor in catalysis.

This sequence belongs to the protein kinase superfamily. TKL Ser/Thr protein kinase family. TGFB receptor subfamily. Mg(2+) is required as a cofactor. Mn(2+) serves as cofactor.

The protein resides in the membrane. It carries out the reaction L-threonyl-[receptor-protein] + ATP = O-phospho-L-threonyl-[receptor-protein] + ADP + H(+). The catalysed reaction is L-seryl-[receptor-protein] + ATP = O-phospho-L-seryl-[receptor-protein] + ADP + H(+). In terms of biological role, on ligand binding, forms a receptor complex consisting of two type II and two type I transmembrane serine/threonine kinases. Type II receptors phosphorylate and activate type I receptors which autophosphorylate, then bind and activate SMAD transcriptional regulators. Receptor for activin. The polypeptide is Activin receptor type-1 (ACVR1) (Gallus gallus (Chicken)).